The following is a 647-amino-acid chain: Microtubule-associated protein 9 (647 aa).

At Ser2 the chain carries N-acetylserine. Residue Tyr12 is modified to Phosphotyrosine. Disordered regions lie at residues 127 to 323, 344 to 421, 491 to 514, 530 to 553, 580 to 600, and 613 to 647; these read KSFS…ELIM, SATA…PDRA, KRLE…EALQ, KNRK…AEKK, NEKR…KQAI, and QERI…AKVF. Positions 133–145 are enriched in basic and acidic residues; that stretch reads QNKDEEFEKDKIK. Residues 155 to 166 are compositionally biased toward polar residues; sequence IKSTSSAENNSL. The segment covering 174-186 has biased composition (basic residues); sequence PSPRPRSMLKKKS. A coiled-coil region spans residues 184–210; the sequence is KKSHMEEKDGLEDKETALSEELELHSA. The span at 187-200 shows a compositional bias: basic and acidic residues; that stretch reads HMEEKDGLEDKETA. Composition is skewed to polar residues over residues 210–219 and 239–249; these read APSSLPTPNG and CLTSLASSSLK. Positions 268–287 are enriched in basic and acidic residues; it reads DPNEEITENHNSLKSDENKE. A coiled-coil region spans residues 298–328; the sequence is AVEKSKESQVTADDLEEEKAKAELIMDDDRT. Residues 365–374 show a composition bias toward low complexity; sequence NNRASSASAR. The stretch at 443 to 628 forms a coiled coil; that stretch reads MHRIKRIESE…KQKKRHSFLE (186 aa).

Binds to purified microtubules via its C-terminus.

It is found in the cytoplasm. The protein localises to the cytoskeleton. The protein resides in the spindle. Functionally, involved in organization of the bipolar mitotic spindle. Required for bipolar spindle assembly, mitosis progression and cytokinesis. May act by stabilizing interphase microtubules. This chain is Microtubule-associated protein 9 (MAP9), found in Homo sapiens (Human).